Here is a 450-residue protein sequence, read N- to C-terminus: Divalent metal cation transporter MntH (450 aa).

Helical transmembrane passes span 34–54, 59–81, 108–128, 141–161, 170–190, 212–232, 263–283, 305–325, 361–381, 383–403, and 422–442; these read LSFL…GNWI, GGAQ…AMLL, IAII…IAEV, IPLI…LFIM, AIVG…VYIS, GILY…NLYL, IQLS…ASLF, PVLG…ALLA, SLAV…AAKI, QLLV…LIPL, and VNII…YLIV.

This sequence belongs to the NRAMP family.

It localises to the cell membrane. H(+)-stimulated, divalent metal cation uptake system. This is Divalent metal cation transporter MntH from Staphylococcus aureus (strain MRSA252).